Reading from the N-terminus, the 123-residue chain is MTDRILYIVSNMSSVPWEGSAAAAVPATSPPTPGHYHVLYRGCGETQVGWHGETYCLVGGYRVHGDAPLATPTKAEAEKPAPRRAPKRRQATIESDKDLGCSSPKIRRLEHRGRRLTPQKLAG.

Residues 67 to 123 form a disordered region; it reads APLATPTKAEAEKPAPRRAPKRRQATIESDKDLGCSSPKIRRLEHRGRRLTPQKLAG. Positions 105-117 are enriched in basic residues; it reads KIRRLEHRGRRLT.

This chain is DPEP2 neighbor protein, found in Homo sapiens (Human).